Here is a 318-residue protein sequence, read N- to C-terminus: GPN-loop GTPase 2 (318 aa).

29–34 is a GTP binding site; that stretch reads GSGKST. Positions 85-87 match the Gly-Pro-Asn (GPN)-loop; involved in dimer interface motif; that stretch reads GPN. 187–190 contacts GTP; that stretch reads SKMD.

This sequence belongs to the GPN-loop GTPase family. As to quaternary structure, heterodimers with gpn1 or gpn3. Binds to RNA polymerase II (RNAPII).

In terms of biological role, small GTPase required for proper localization of RNA polymerase II and III (RNAPII and RNAPIII). May act at an RNAP assembly step prior to nuclear import. The protein is GPN-loop GTPase 2 of Xenopus laevis (African clawed frog).